The following is a 609-amino-acid chain: Laccase-1 (609 aa).

Positions 1-20 (MYLSTVLFPLLALNLGLSHA) are cleaved as a signal peptide. Residues 45–141 (VFTNGEYPGP…DGQVGAMYIR (97 aa)) form the Plastocyanin-like 1 domain. N75 carries N-linked (GlcNAc...) asparagine glycosylation. H79, H81, H123, and H125 together coordinate Cu cation. N257 is a glycosylation site (N-linked (GlcNAc...) asparagine). One can recognise a Plastocyanin-like 2 domain in the interval 270 to 372 (TPSSVEPPVI…MSVYAILSYV (103 aa)). Residues N403, N443, and N486 are each glycosylated (N-linked (GlcNAc...) asparagine). Residues 463-602 (STPLLFEPDP…MGGMALALLD (140 aa)) enclose the Plastocyanin-like 3 domain. Residues H508, H511, and H513 each coordinate Cu cation. N531 and N546 each carry an N-linked (GlcNAc...) asparagine glycan. H585, C586, H587, and H591 together coordinate Cu cation.

It belongs to the multicopper oxidase family. Requires Cu cation as cofactor.

It is found in the secreted. The catalysed reaction is 4 hydroquinone + O2 = 4 benzosemiquinone + 2 H2O. Required for the conversion of the yellow polyketide pigment synthesized by wA to the conidial green pigment. This chain is Laccase-1 (yA), found in Emericella nidulans (strain FGSC A4 / ATCC 38163 / CBS 112.46 / NRRL 194 / M139) (Aspergillus nidulans).